The primary structure comprises 325 residues: Lipoyl synthase (325 aa).

[4Fe-4S] cluster contacts are provided by Cys72, Cys77, Cys83, Cys98, Cys102, Cys105, and Ser312. In terms of domain architecture, Radical SAM core spans Phe84–Lys301.

This sequence belongs to the radical SAM superfamily. Lipoyl synthase family. Requires [4Fe-4S] cluster as cofactor.

The protein localises to the cytoplasm. It catalyses the reaction [[Fe-S] cluster scaffold protein carrying a second [4Fe-4S](2+) cluster] + N(6)-octanoyl-L-lysyl-[protein] + 2 oxidized [2Fe-2S]-[ferredoxin] + 2 S-adenosyl-L-methionine + 4 H(+) = [[Fe-S] cluster scaffold protein] + N(6)-[(R)-dihydrolipoyl]-L-lysyl-[protein] + 4 Fe(3+) + 2 hydrogen sulfide + 2 5'-deoxyadenosine + 2 L-methionine + 2 reduced [2Fe-2S]-[ferredoxin]. It participates in protein modification; protein lipoylation via endogenous pathway; protein N(6)-(lipoyl)lysine from octanoyl-[acyl-carrier-protein]: step 2/2. In terms of biological role, catalyzes the radical-mediated insertion of two sulfur atoms into the C-6 and C-8 positions of the octanoyl moiety bound to the lipoyl domains of lipoate-dependent enzymes, thereby converting the octanoylated domains into lipoylated derivatives. The sequence is that of Lipoyl synthase from Stutzerimonas stutzeri (strain A1501) (Pseudomonas stutzeri).